Reading from the N-terminus, the 364-residue chain is Mitogen-activated protein kinase 11 (364 aa).

The Protein kinase domain occupies 24–308 (LQGLRPVGSG…AAEALAHAYF (285 aa)). Residues 30–38 (VGSGAYGSV) and Lys-53 each bind ATP. Glu-71 is a nilotinib binding site. Asp-168 (proton acceptor) is an active-site residue. Residue Thr-180 is modified to Phosphothreonine; by MAP2K3, MAP2K4 and MAP2K6. The TXY signature appears at 180–182 (TGY). A Phosphotyrosine; by MAP2K3, MAP2K4 and MAP2K6 modification is found at Tyr-182. The tract at residues 312–331 (HDPDDEPEAEPYDESVEAKE) is disordered. The span at 314-326 (PDDEPEAEPYDES) shows a compositional bias: acidic residues. Residue Tyr-323 is modified to Phosphotyrosine; by ZAP70.

Belongs to the protein kinase superfamily. CMGC Ser/Thr protein kinase family. MAP kinase subfamily. In terms of assembly, interacts with HDAC3 and DUSP16. The cofactor is Mg(2+). In terms of processing, dually phosphorylated on Thr-180 and Tyr-182 by MAP2K3/MKK3, MAP2K4/MKK4 and MAP2K6/MKK6, which activates the enzyme.

It is found in the cytoplasm. Its subcellular location is the nucleus. The catalysed reaction is L-seryl-[protein] + ATP = O-phospho-L-seryl-[protein] + ADP + H(+). The enzyme catalyses L-threonyl-[protein] + ATP = O-phospho-L-threonyl-[protein] + ADP + H(+). Its activity is regulated as follows. Activated by phosphorylation on threonine and tyrosine by MAP2K3/MKK3, MAP2K4/MKK4 and MAP2K6/MKK6. MAP2K3/MKK3 and MAP2K6/MKK6 are both essential for the activation of MAPK11 induced by environmental stress. HDAC3 interacts directly and selectively with MAPK11 to repress ATF2 transcriptional activity, and regulate TNF gene expression in LPS-stimulated cells. Inhibited by SB203580 and pyridinyl-imidazole related compounds. In terms of biological role, serine/threonine kinase which acts as an essential component of the MAP kinase signal transduction pathway. MAPK11 is one of the four p38 MAPKs which play an important role in the cascades of cellular responses evoked by extracellular stimuli such as pro-inflammatory cytokines or physical stress leading to direct activation of transcription factors. Accordingly, p38 MAPKs phosphorylate a broad range of proteins and it has been estimated that they may have approximately 200 to 300 substrates each. MAPK11 functions are mostly redundant with those of MAPK14. Some of the targets are downstream kinases which are activated through phosphorylation and further phosphorylate additional targets. RPS6KA5/MSK1 and RPS6KA4/MSK2 can directly phosphorylate and activate transcription factors such as CREB1, ATF1, the NF-kappa-B isoform RELA/NFKB3, STAT1 and STAT3, but can also phosphorylate histone H3 and the nucleosomal protein HMGN1. RPS6KA5/MSK1 and RPS6KA4/MSK2 play important roles in the rapid induction of immediate-early genes in response to stress or mitogenic stimuli, either by inducing chromatin remodeling or by recruiting the transcription machinery. On the other hand, two other kinase targets, MAPKAPK2/MK2 and MAPKAPK3/MK3, participate in the control of gene expression mostly at the post-transcriptional level, by phosphorylating ZFP36 (tristetraprolin) and ELAVL1, and by regulating EEF2K, which is important for the elongation of mRNA during translation. MKNK1/MNK1 and MKNK2/MNK2, two other kinases activated by p38 MAPKs, regulate protein synthesis by phosphorylating the initiation factor EIF4E2. In the cytoplasm, the p38 MAPK pathway is an important regulator of protein turnover. For example, CFLAR is an inhibitor of TNF-induced apoptosis whose proteasome-mediated degradation is regulated by p38 MAPK phosphorylation. Ectodomain shedding of transmembrane proteins is regulated by p38 MAPKs as well. In response to inflammatory stimuli, p38 MAPKs phosphorylate the membrane-associated metalloprotease ADAM17. Such phosphorylation is required for ADAM17-mediated ectodomain shedding of TGF-alpha family ligands, which results in the activation of EGFR signaling and cell proliferation. Additional examples of p38 MAPK substrates are the FGFR1. FGFR1 can be translocated from the extracellular space into the cytosol and nucleus of target cells, and regulates processes such as rRNA synthesis and cell growth. FGFR1 translocation requires p38 MAPK activation. In the nucleus, many transcription factors are phosphorylated and activated by p38 MAPKs in response to different stimuli. Classical examples include ATF1, ATF2, ATF6, ELK1, PTPRH, DDIT3, TP53/p53 and MEF2C and MEF2A. The p38 MAPKs are emerging as important modulators of gene expression by regulating chromatin modifiers and remodelers. The promoters of several genes involved in the inflammatory response, such as IL6, IL8 and IL12B, display a p38 MAPK-dependent enrichment of histone H3 phosphorylation on 'Ser-10' (H3S10ph) in LPS-stimulated myeloid cells. This phosphorylation enhances the accessibility of the cryptic NF-kappa-B-binding sites marking promoters for increased NF-kappa-B recruitment. Phosphorylates methyltransferase DOT1L on 'Ser-834', 'Thr-900', 'Ser-902', 'Thr-984', 'Ser-1001', 'Ser-1009' and 'Ser-1104'. The chain is Mitogen-activated protein kinase 11 (Mapk11) from Mus musculus (Mouse).